We begin with the raw amino-acid sequence, 1640 residues long: Phospholipase D C (1640 aa).

A compositionally biased stretch (polar residues) spans 122-132 (SHRSNQSFNHS). Disordered stretches follow at residues 122–247 (SHRS…KRLS), 264–283 (HNQN…HTTT), 439–499 (EKQQ…YKYN), and 521–541 (DDEY…PSQE). Low complexity predominate over residues 133–193 (NSTTPLNTTN…YSSDNSYLHN (61 aa)). Residues 197–231 (DIYEDEDDEDDEDDDDDEDEDDEGKEFEQDDEDES) show a composition bias toward acidic residues. Residues 232–247 (TISSMSLKNSQAKRLS) show a composition bias toward polar residues. 2 stretches are compositionally biased toward low complexity: residues 264–273 (HNQNHQNHQN) and 467–499 (TTTT…YKYN). The span at 521 to 534 (DDEYYYGEYDDEDD) shows a compositional bias: acidic residues. The PLD phosphodiesterase 1 domain occupies 1009–1036 (LYWSHHQKVVVVDQRIAFIGGLDLCFGR). Residues His-1014, Lys-1016, and Asp-1021 contribute to the active site. Composition is skewed to low complexity over residues 1149 to 1274 (INNN…NNLN) and 1282 to 1296 (HNNS…QQQQ). A disordered region spans residues 1149 to 1315 (INNNNNNANN…YQPPLPPQQR (167 aa)). Positions 1297-1306 (QHHHHHHHHY) are enriched in basic residues. The PLD phosphodiesterase 2 domain occupies 1460–1487 (EQIYVHSKVLIVDDKIAIIGSANINDRS). Active-site residues include His-1465, Lys-1467, and Asp-1472.

Belongs to the phospholipase D family.

The catalysed reaction is a 1,2-diacyl-sn-glycero-3-phosphocholine + H2O = a 1,2-diacyl-sn-glycero-3-phosphate + choline + H(+). Its activity is regulated as follows. Inhibited by butan-1-ol. In terms of biological role, plays a role in cell growth. Hydrolyzes membrane phospholipids, such as PtdCho (phosphatidylcholine), producing the free headgroup and PtdOH (phosphatidic acid; signaling molecule on its own). Involved in the inhibition of actin-based motility and endocytosis. Its inhibition causes complete collapse of F-actin organization. The sequence is that of Phospholipase D C (pldC) from Dictyostelium discoideum (Social amoeba).